A 110-amino-acid polypeptide reads, in one-letter code: ATP synthase subunit c (110 aa).

3 consecutive transmembrane segments (helical) span residues 4–24, 37–57, and 81–101; these read FFVI…VFAA, ATAG…AGMG, and FIVG…FVLI.

The protein belongs to the ATPase C chain family. As to quaternary structure, F-type ATPases have 2 components, F(1) - the catalytic core - and F(0) - the membrane proton channel. F(1) has five subunits: alpha(3), beta(3), gamma(1), delta(1), epsilon(1). F(0) has three main subunits: a(1), b(2) and c(10-14). The alpha and beta chains form an alternating ring which encloses part of the gamma chain. F(1) is attached to F(0) by a central stalk formed by the gamma and epsilon chains, while a peripheral stalk is formed by the delta and b chains.

Its subcellular location is the cell inner membrane. F(1)F(0) ATP synthase produces ATP from ADP in the presence of a proton or sodium gradient. F-type ATPases consist of two structural domains, F(1) containing the extramembraneous catalytic core and F(0) containing the membrane proton channel, linked together by a central stalk and a peripheral stalk. During catalysis, ATP synthesis in the catalytic domain of F(1) is coupled via a rotary mechanism of the central stalk subunits to proton translocation. Its function is as follows. Key component of the F(0) channel; it plays a direct role in translocation across the membrane. A homomeric c-ring of between 10-14 subunits forms the central stalk rotor element with the F(1) delta and epsilon subunits. This Thermodesulfovibrio yellowstonii (strain ATCC 51303 / DSM 11347 / YP87) protein is ATP synthase subunit c.